Reading from the N-terminus, the 28-residue chain is Conotoxin Cl9b (28 aa).

4-hydroxyproline occurs at positions 17 and 28.

In terms of processing, contains 3 disulfide bonds. As to expression, expressed by the venom duct.

The protein localises to the secreted. The sequence is that of Conotoxin Cl9b from Californiconus californicus (California cone).